Consider the following 499-residue polypeptide: Cytosol aminopeptidase (499 aa).

Mn(2+) contacts are provided by Lys267 and Asp272. The active site involves Lys279. Asp290, Asp349, and Glu351 together coordinate Mn(2+). Residue Arg353 is part of the active site.

This sequence belongs to the peptidase M17 family. The cofactor is Mn(2+).

The protein localises to the cytoplasm. The enzyme catalyses Release of an N-terminal amino acid, Xaa-|-Yaa-, in which Xaa is preferably Leu, but may be other amino acids including Pro although not Arg or Lys, and Yaa may be Pro. Amino acid amides and methyl esters are also readily hydrolyzed, but rates on arylamides are exceedingly low.. The catalysed reaction is Release of an N-terminal amino acid, preferentially leucine, but not glutamic or aspartic acids.. In terms of biological role, presumably involved in the processing and regular turnover of intracellular proteins. Catalyzes the removal of unsubstituted N-terminal amino acids from various peptides. This is Cytosol aminopeptidase (pepA) from Buchnera aphidicola subsp. Acyrthosiphon pisum (strain APS) (Acyrthosiphon pisum symbiotic bacterium).